Consider the following 385-residue polypeptide: MSWQQRVDDALTARRVTDTLRRRYVVSQGAGRWLVANGRQYLNFSSNDYLGLSQHPQIIRAWQQAATRFGVGSGGSGHISGYSVAHQALEEELAQWLGYPRALLFISGFAANQAVITALMKKNDRIVADRLSHASLLEAANLSPAQLRRFIHNDTQHLSRLLQSPCVGQQLVVTEGVYSMDGDSAPLAEIQHIARRHHAWLLVDDAHGIGVTGDEGRGTCWLRGVKPELLVVTFGKGFGVSGAAVLCSESVADYLLQFARHLVYSTSMPPAQAQALSASLAVIRSDEGGERREKLAALVQRFRAGVNASRFTLLNAHSAIQPLIVGDNSRALRLAEALRQQGCWATAIRPPTVPVGTARLRLTLTQAHEACDIDRLLEVLHGAGE.

Residue R21 participates in substrate binding. 108–109 is a pyridoxal 5'-phosphate binding site; it reads GF. Residue H133 coordinates substrate. Pyridoxal 5'-phosphate-binding residues include S179, H207, and T233. The residue at position 236 (K236) is an N6-(pyridoxal phosphate)lysine. T352 provides a ligand contact to substrate.

This sequence belongs to the class-II pyridoxal-phosphate-dependent aminotransferase family. BioF subfamily. In terms of assembly, homodimer. Pyridoxal 5'-phosphate is required as a cofactor.

It catalyses the reaction 6-carboxyhexanoyl-[ACP] + L-alanine + H(+) = (8S)-8-amino-7-oxononanoate + holo-[ACP] + CO2. It participates in cofactor biosynthesis; biotin biosynthesis. Its function is as follows. Catalyzes the decarboxylative condensation of pimeloyl-[acyl-carrier protein] and L-alanine to produce 8-amino-7-oxononanoate (AON), [acyl-carrier protein], and carbon dioxide. The polypeptide is 8-amino-7-oxononanoate synthase (Salmonella typhimurium (strain LT2 / SGSC1412 / ATCC 700720)).